A 631-amino-acid polypeptide reads, in one-letter code: Phosphomethylpyrimidine synthase (631 aa).

Substrate contacts are provided by residues Asn239, Met268, Tyr297, His333, 353–355 (SRG), 394–397 (DGLR), and Glu433. His437 contacts Zn(2+). Tyr460 is a substrate binding site. His501 lines the Zn(2+) pocket. [4Fe-4S] cluster contacts are provided by Cys581, Cys584, and Cys589.

Belongs to the ThiC family. As to quaternary structure, homodimer. It depends on [4Fe-4S] cluster as a cofactor.

The catalysed reaction is 5-amino-1-(5-phospho-beta-D-ribosyl)imidazole + S-adenosyl-L-methionine = 4-amino-2-methyl-5-(phosphooxymethyl)pyrimidine + CO + 5'-deoxyadenosine + formate + L-methionine + 3 H(+). It functions in the pathway cofactor biosynthesis; thiamine diphosphate biosynthesis. Catalyzes the synthesis of the hydroxymethylpyrimidine phosphate (HMP-P) moiety of thiamine from aminoimidazole ribotide (AIR) in a radical S-adenosyl-L-methionine (SAM)-dependent reaction. In Escherichia coli O7:K1 (strain IAI39 / ExPEC), this protein is Phosphomethylpyrimidine synthase.